Reading from the N-terminus, the 501-residue chain is MSTNKKTIVWFRRDLRIEDNPALAAAAHEGSVFPVFIWCPEEEGQFYPGRASRWWMKQSLAHLRQSLKALGSELTLIKTHSTVSAILDCVRATGATKVVFNHLYDPVSLVRDHTVKEKLVERGISVQSYNGDLCMSPGRYTVKRANLLLVLILTGKKCLDMSVESVVLPPPWRLMPLSAAETVWACSVEELGLENEAEKPSNALLTRAWSPGWSNADKILNEFIEKQLIDYAKNSKKVVGNSTSLLSPYLHFGEISVRRVFQCARMKQIIWARDKNGEGEESADLFLRGIGLRDYSRIICFNFPFTHEQSLLSHLRFFPWDADVDKFKAWRQGRTGYPLVDAGMRELWATGWMHNRIRVIVSSFAVKFLLLPWKWGMKYFWDTLLDADLECDIIGWQYISGSLPDGHELDRLDNPAIQGAKYDPEGEYIRQWLPELARLPTEWIHHPWDAPLTVLKASGVELGTNYAKPIVVIDTARELLTKAISRTREAQIMIGACGDEM.

The region spanning 5–134 (KKTIVWFRRD…SVQSYNGDLC (130 aa)) is the Photolyase/cryptochrome alpha/beta domain. Residues Tyr231 and 243–247 (TSLLS) contribute to the FAD site. Arg356 provides a ligand contact to ATP. Residues Asp386 and Asp388 each coordinate FAD. Position 405 (Asp405) interacts with ATP.

It belongs to the DNA photolyase class-1 family. In terms of assembly, homodimer. The cofactor is FAD. (6R)-5,10-methylene-5,6,7,8-tetrahydrofolate serves as cofactor.

Its function is as follows. Mediates blue light-induced gene expression in addition to its role in blue light-dependent inhibition of stem growth. The sequence is that of Cryptochrome-1 (PHR1) from Sinapis alba (White mustard).